Here is a 541-residue protein sequence, read N- to C-terminus: Membrane protein insertase YidC (541 aa).

6 helical membrane-spanning segments follow: residues 6–26, 325–345, 349–369, 420–440, 457–477, and 500–520; these read NILLIGLLFVSFLLWQQWQAD, LVVDYGFLWWLAVPIHWLLMF, FVGNWGVAIILITLTVRGLLF, GGCLPIILQMPIFIALYWVLL, LSVQDPYYILPLLMGVSMFIM, and VIFTVFFLWFPSGLVLYWLVG.

It belongs to the OXA1/ALB3/YidC family. Type 1 subfamily. Interacts with the Sec translocase complex via SecD. Specifically interacts with transmembrane segments of nascent integral membrane proteins during membrane integration.

It localises to the cell inner membrane. Its function is as follows. Required for the insertion and/or proper folding and/or complex formation of integral membrane proteins into the membrane. Involved in integration of membrane proteins that insert both dependently and independently of the Sec translocase complex, as well as at least some lipoproteins. Aids folding of multispanning membrane proteins. The protein is Membrane protein insertase YidC of Shewanella sp. (strain W3-18-1).